Reading from the N-terminus, the 274-residue chain is Kit ligand (274 aa).

Residues Met1–Thr25 form the signal peptide. Residue Gln26 is modified to Pyrrolidone carboxylic acid. Residues Gln26–Gln215 lie on the Extracellular side of the membrane. Disulfide bonds link Cys29/Cys114 and Cys68/Cys164. N-linked (GlcNAc...) asparagine glycosylation is found at Asn90, Asn145, and Asn196. A helical transmembrane segment spans residues Trp216 to Trp238. The Cytoplasmic segment spans residues Lys239–Val274.

Belongs to the SCF family. Homodimer, non-covalently linked. Post-translationally, a soluble form is produced by proteolytic processing of isoform 1 in the extracellular domain.

It is found in the cell membrane. It localises to the cytoplasm. Its subcellular location is the cytoskeleton. The protein resides in the cell projection. The protein localises to the lamellipodium. It is found in the filopodium. It localises to the secreted. In terms of biological role, stimulates the proliferation of mast cells. Able to augment the proliferation of both myeloid and lymphoid hematopoietic progenitors in bone marrow culture. Also mediates cell-cell adhesion. Acts synergistically with other cytokines, probably interleukins. This chain is Kit ligand (KITLG), found in Bos taurus (Bovine).